Here is a 345-residue protein sequence, read N- to C-terminus: Protein RecA (345 aa).

An ATP-binding site is contributed by glycine 65–threonine 72.

It belongs to the RecA family.

It is found in the cytoplasm. Can catalyze the hydrolysis of ATP in the presence of single-stranded DNA, the ATP-dependent uptake of single-stranded DNA by duplex DNA, and the ATP-dependent hybridization of homologous single-stranded DNAs. It interacts with LexA causing its activation and leading to its autocatalytic cleavage. This chain is Protein RecA, found in Colwellia psychrerythraea (strain 34H / ATCC BAA-681) (Vibrio psychroerythus).